The following is a 141-amino-acid chain: Hemoglobin subunit alpha-D (141 aa).

Residues 1–141 (VLTAEDRRLL…VADVLCEKYR (141 aa)) enclose the Globin domain. Residues Q58 and H87 each coordinate heme b.

Belongs to the globin family. In terms of assembly, heterotetramer of two alpha chains and two beta chains. Red blood cells.

In terms of biological role, involved in oxygen transport from the lung to the various peripheral tissues. The sequence is that of Hemoglobin subunit alpha-D from Drymarchon melanurus erebennus (Texas indigo snake).